The following is a 453-amino-acid chain: Cholesterol 7-desaturase nvd (453 aa).

A helical membrane pass occupies residues 53-73 (IVEYILILTLMFAFSAILYVI). In terms of domain architecture, Rieske spans 126 to 229 (WFAVAETREL…VVETDGAIWI (104 aa)). [2Fe-2S] cluster is bound by residues C167, H169, C187, and H190.

It belongs to the cholesterol 7-desaturase family. Requires [2Fe-2S] cluster as cofactor.

It localises to the membrane. It catalyses the reaction cholesterol + NADPH + O2 + H(+) = 7-dehydrocholesterol + NADP(+) + 2 H2O. The enzyme catalyses cholesterol + NADH + O2 + H(+) = 7-dehydrocholesterol + NAD(+) + 2 H2O. The protein operates within steroid hormone biosynthesis; dafachronic acid biosynthesis. Its function is as follows. Catalyzes the production of 7-dehydrocholesterol (7-DHC or cholesta-5,7-dien-3beta-ol) by inserting a double bond (desaturating) at the C7-C8 single bond of cholesterol. Essential regulator of steroid biosynthesis as this reaction is the first step in the synthesis of the steroid hormone Delta(7)-dafachronic acid. This chain is Cholesterol 7-desaturase nvd, found in Bombyx mori (Silk moth).